A 462-amino-acid chain; its full sequence is uncharacterized protein (462 aa).

A TRAM domain is found at 12 to 70 (MLKKNDIIQVAISDLSHEGAGVAKHDGFVFFVDNALPEEVIDMRVLKVNKNSGFGKVEA). 4 residues coordinate S-adenosyl-L-methionine: Gln294, Tyr323, Glu344, and Asp392. Residue Cys419 is the Nucleophile of the active site.

Belongs to the class I-like SAM-binding methyltransferase superfamily. RNA M5U methyltransferase family.

This is an uncharacterized protein from Streptococcus pyogenes serotype M18 (strain MGAS8232).